A 69-amino-acid chain; its full sequence is Large ribosomal subunit protein uL29 (69 aa).

Belongs to the universal ribosomal protein uL29 family.

The chain is Large ribosomal subunit protein uL29 from Rhodospirillum centenum (strain ATCC 51521 / SW).